The chain runs to 198 residues: Probable chorismate pyruvate-lyase (198 aa).

Residues arginine 76, leucine 114, and glutamate 172 each contribute to the substrate site.

Belongs to the UbiC family.

Its subcellular location is the cytoplasm. It catalyses the reaction chorismate = 4-hydroxybenzoate + pyruvate. Its pathway is cofactor biosynthesis; ubiquinone biosynthesis. Functionally, removes the pyruvyl group from chorismate, with concomitant aromatization of the ring, to provide 4-hydroxybenzoate (4HB) for the ubiquinone pathway. The chain is Probable chorismate pyruvate-lyase from Bordetella avium (strain 197N).